A 73-amino-acid chain; its full sequence is Tetrahydromethanopterin S-methyltransferase subunit F (73 aa).

Residues 52 to 72 form a helical membrane-spanning segment; that stretch reads IGFAAGFLFSLLMVIVLPLLF.

This sequence belongs to the MtrF family. The complex is composed of 8 subunits; MtrA, MtrB, MtrC, MtrD, MtrE, MtrF, MtrG and MtrH.

It localises to the cell membrane. The catalysed reaction is 5-methyl-5,6,7,8-tetrahydromethanopterin + coenzyme M + 2 Na(+)(in) = 5,6,7,8-tetrahydromethanopterin + methyl-coenzyme M + 2 Na(+)(out). It functions in the pathway one-carbon metabolism; methanogenesis from CO(2); methyl-coenzyme M from 5,10-methylene-5,6,7,8-tetrahydromethanopterin: step 2/2. Its function is as follows. Part of a complex that catalyzes the formation of methyl-coenzyme M and tetrahydromethanopterin from coenzyme M and methyl-tetrahydromethanopterin. This is an energy-conserving, sodium-ion translocating step. In Methanosarcina barkeri (strain Fusaro / DSM 804), this protein is Tetrahydromethanopterin S-methyltransferase subunit F.